Reading from the N-terminus, the 326-residue chain is Adenosine receptor A1 (326 aa).

Residues 1-10 lie on the Extracellular side of the membrane; it reads MPPYISAFQA. The chain crosses the membrane as a helical span at residues 11–33; that stretch reads AYIGIEVLIALVSVPGNVLVIWA. Topologically, residues 34-46 are cytoplasmic; that stretch reads VKVNQALRDATFC. A helical membrane pass occupies residues 47–69; it reads FIVSLAVADVAVGALVIPLAILI. The Extracellular portion of the chain corresponds to 70 to 80; that stretch reads NIGPQTYFHTC. A disulfide bond links Cys80 and Cys169. A helical membrane pass occupies residues 81 to 102; the sequence is LMVACPVLILTQSSILALLAIA. Residues 103–123 are Cytoplasmic-facing; that stretch reads VDRYLRVKIPLRYKTVVTQRR. A helical membrane pass occupies residues 124 to 146; it reads AAVAIAGCWILSLVVGLTPMFGW. Residues 147-176 lie on the Extracellular side of the membrane; that stretch reads NNLSVVEQDWRANGSVGEPVIKCEFEKVIS. N-linked (GlcNAc...) asparagine glycosylation is found at Asn148 and Asn159. A helical transmembrane segment spans residues 177 to 201; sequence MEYMVYFNFFVWVLPPLLLMVLIYL. The Cytoplasmic segment spans residues 202–235; the sequence is EVFYLIRKQLNKKVSASSGDPQKYYGKELKIAKS. The helical transmembrane segment at 236–259 threads the bilayer; sequence LALILFLFALSWLPLHILNCITLF. Residues 260 to 267 are Extracellular-facing; that stretch reads CPTCQKPS. A helical transmembrane segment spans residues 268–292; sequence ILIYIAIFLTHGNSAMNPIVYAFRI. The Cytoplasmic segment spans residues 293–326; it reads HKFRVTFLKIWNDHFRCQPKPPIDEDLPEEKAED. Residue Cys309 is the site of S-palmitoyl cysteine attachment.

The protein belongs to the G-protein coupled receptor 1 family. As to expression, widely expressed in brain and spinal cord.

It is found in the cell membrane. In terms of biological role, receptor for adenosine. The activity of this receptor is mediated by G proteins which inhibit adenylyl cyclase. The protein is Adenosine receptor A1 (Adora1) of Rattus norvegicus (Rat).